A 287-amino-acid polypeptide reads, in one-letter code: ATP synthase gamma chain (287 aa).

It belongs to the ATPase gamma chain family. In terms of assembly, F-type ATPases have 2 components, CF(1) - the catalytic core - and CF(0) - the membrane proton channel. CF(1) has five subunits: alpha(3), beta(3), gamma(1), delta(1), epsilon(1). CF(0) has three main subunits: a, b and c.

Its subcellular location is the cell inner membrane. Its function is as follows. Produces ATP from ADP in the presence of a proton gradient across the membrane. The gamma chain is believed to be important in regulating ATPase activity and the flow of protons through the CF(0) complex. The chain is ATP synthase gamma chain from Yersinia pestis.